Consider the following 82-residue polypeptide: RNA-binding protein Hfq (82 aa).

Residues 11 to 72 (DTFLNAVRKS…ISTIAPSAPV (62 aa)) form the Sm domain.

It belongs to the Hfq family. As to quaternary structure, homohexamer.

RNA chaperone that binds small regulatory RNA (sRNAs) and mRNAs to facilitate mRNA translational regulation in response to envelope stress, environmental stress and changes in metabolite concentrations. Also binds with high specificity to tRNAs. In Hyphomonas neptunium (strain ATCC 15444), this protein is RNA-binding protein Hfq.